The following is a 303-amino-acid chain: Coenzyme PQQ synthesis protein B (303 aa).

Belongs to the PqqB family.

Its pathway is cofactor biosynthesis; pyrroloquinoline quinone biosynthesis. May be involved in the transport of PQQ or its precursor to the periplasm. This chain is Coenzyme PQQ synthesis protein B, found in Rhizobium meliloti (strain 1021) (Ensifer meliloti).